The sequence spans 325 residues: MYIAVPAEILGIILPLLLGVAFLVLAERKVMAFVQRRKGPDVVGSFGLLQPLADGLKLILKEPISPSSANFSLFRMAPVATFMLSLVARAVVPFDYGMVLSDPNIGLLYLFAISSLGVYGIIIAGWSSNSKYAFLGALRSAAQMVPYEVSIGLILITVLICVGSRNSSEIVMAQKQIWSGIPLFPVLVMFFISRLAETNRAPFDLPEAEAESVAGYNVEYSSMGSALSFLGEYANMILMSGLCTSLSPGGWPPILDLPISKKIPGSIWFSIKVILFLFLYIWVRAAFPRYRYDQLMGLGRKVFLPLSLARVVPVSGVLVTFQWLP.

Helical transmembrane passes span valine 5–leucine 25, valine 79–valine 99, isoleucine 105–glycine 125, methionine 144–serine 164, isoleucine 177–glutamate 197, isoleucine 237–leucine 257, isoleucine 263–valine 283, and valine 302–glutamine 322.

The protein belongs to the complex I subunit 1 family.

The protein localises to the mitochondrion inner membrane. The catalysed reaction is a ubiquinone + NADH + 5 H(+)(in) = a ubiquinol + NAD(+) + 4 H(+)(out). Its function is as follows. Core subunit of the mitochondrial membrane respiratory chain NADH dehydrogenase (Complex I) that is believed to belong to the minimal assembly required for catalysis. Complex I functions in the transfer of electrons from NADH to the respiratory chain. The immediate electron acceptor for the enzyme is believed to be ubiquinone. This Petunia hybrida (Petunia) protein is NADH-ubiquinone oxidoreductase chain 1 (ND1).